The chain runs to 254 residues: Imidazole glycerol phosphate synthase subunit HisF (254 aa).

Catalysis depends on residues aspartate 11 and aspartate 130.

The protein belongs to the HisA/HisF family. As to quaternary structure, heterodimer of HisH and HisF.

It localises to the cytoplasm. The enzyme catalyses 5-[(5-phospho-1-deoxy-D-ribulos-1-ylimino)methylamino]-1-(5-phospho-beta-D-ribosyl)imidazole-4-carboxamide + L-glutamine = D-erythro-1-(imidazol-4-yl)glycerol 3-phosphate + 5-amino-1-(5-phospho-beta-D-ribosyl)imidazole-4-carboxamide + L-glutamate + H(+). The protein operates within amino-acid biosynthesis; L-histidine biosynthesis; L-histidine from 5-phospho-alpha-D-ribose 1-diphosphate: step 5/9. Its function is as follows. IGPS catalyzes the conversion of PRFAR and glutamine to IGP, AICAR and glutamate. The HisF subunit catalyzes the cyclization activity that produces IGP and AICAR from PRFAR using the ammonia provided by the HisH subunit. The protein is Imidazole glycerol phosphate synthase subunit HisF of Trichlorobacter lovleyi (strain ATCC BAA-1151 / DSM 17278 / SZ) (Geobacter lovleyi).